Here is a 359-residue protein sequence, read N- to C-terminus: Large ribosomal subunit protein bL27m (359 aa).

The transit peptide at 1-24 (MSFWKVATLWQMPLRPSILVQVRT) directs the protein to the mitochondrion. Residues 29 to 48 (AAGSRTSMKDSAGRRLGPKK) form a disordered region. Basic and acidic residues predominate over residues 35 to 48 (SMKDSAGRRLGPKK).

The protein belongs to the bacterial ribosomal protein bL27 family.

It localises to the mitochondrion. Its function is as follows. Component of the large subunit of mitochondrial ribosome. This chain is Large ribosomal subunit protein bL27m (MRPL2), found in Eremothecium gossypii (strain ATCC 10895 / CBS 109.51 / FGSC 9923 / NRRL Y-1056) (Yeast).